Reading from the N-terminus, the 336-residue chain is Glycerol-3-phosphate dehydrogenase [NAD(P)+] (336 aa).

NADPH is bound by residues S16, Y17, H37, and K111. Residues K111, G140, and T142 each coordinate sn-glycerol 3-phosphate. NADPH is bound at residue A144. Positions 196, 249, 259, 260, and 261 each coordinate sn-glycerol 3-phosphate. K196 (proton acceptor) is an active-site residue. R260 contacts NADPH. NADPH contacts are provided by V284 and E286.

Belongs to the NAD-dependent glycerol-3-phosphate dehydrogenase family.

It localises to the cytoplasm. It catalyses the reaction sn-glycerol 3-phosphate + NAD(+) = dihydroxyacetone phosphate + NADH + H(+). The enzyme catalyses sn-glycerol 3-phosphate + NADP(+) = dihydroxyacetone phosphate + NADPH + H(+). The protein operates within membrane lipid metabolism; glycerophospholipid metabolism. Functionally, catalyzes the reduction of the glycolytic intermediate dihydroxyacetone phosphate (DHAP) to sn-glycerol 3-phosphate (G3P), the key precursor for phospholipid synthesis. In Glaesserella parasuis serovar 5 (strain SH0165) (Haemophilus parasuis), this protein is Glycerol-3-phosphate dehydrogenase [NAD(P)+].